A 544-amino-acid polypeptide reads, in one-letter code: Chaperonin GroEL 1 (544 aa).

ATP contacts are provided by residues 29–32 (TLGP), 86–90 (DGTTT), G413, 476–478 (NAA), and D492. The segment at 523–544 (EPVKAPAGGGDMDGMGGMGGMM) is disordered. Gly residues predominate over residues 529–544 (AGGGDMDGMGGMGGMM).

Belongs to the chaperonin (HSP60) family. Forms a cylinder of 14 subunits composed of two heptameric rings stacked back-to-back. Interacts with the co-chaperonin GroES.

It localises to the cytoplasm. It catalyses the reaction ATP + H2O + a folded polypeptide = ADP + phosphate + an unfolded polypeptide.. In terms of biological role, together with its co-chaperonin GroES, plays an essential role in assisting protein folding. The GroEL-GroES system forms a nano-cage that allows encapsulation of the non-native substrate proteins and provides a physical environment optimized to promote and accelerate protein folding. In Cutibacterium acnes (strain DSM 16379 / KPA171202) (Propionibacterium acnes), this protein is Chaperonin GroEL 1.